A 416-amino-acid chain; its full sequence is Gamma-glutamyl phosphate reductase (416 aa).

It belongs to the gamma-glutamyl phosphate reductase family.

Its subcellular location is the cytoplasm. It catalyses the reaction L-glutamate 5-semialdehyde + phosphate + NADP(+) = L-glutamyl 5-phosphate + NADPH + H(+). The protein operates within amino-acid biosynthesis; L-proline biosynthesis; L-glutamate 5-semialdehyde from L-glutamate: step 2/2. Functionally, catalyzes the NADPH-dependent reduction of L-glutamate 5-phosphate into L-glutamate 5-semialdehyde and phosphate. The product spontaneously undergoes cyclization to form 1-pyrroline-5-carboxylate. This Streptococcus pyogenes serotype M6 (strain ATCC BAA-946 / MGAS10394) protein is Gamma-glutamyl phosphate reductase.